Consider the following 117-residue polypeptide: Fluoride-specific ion channel FluC 2 (117 aa).

2 helical membrane-spanning segments follow: residues 1 to 21 and 46 to 66; these read MISI…RSAI and FLIG…AFFV. Positions 71 and 74 each coordinate Na(+). Residues 95–115 traverse the membrane as a helical segment; it reads LFLNYSLLQFIIGFIACYIGY.

The protein belongs to the fluoride channel Fluc/FEX (TC 1.A.43) family.

It localises to the cell membrane. The enzyme catalyses fluoride(in) = fluoride(out). Na(+) is not transported, but it plays an essential structural role and its presence is essential for fluoride channel function. Its function is as follows. Fluoride-specific ion channel. Important for reducing fluoride concentration in the cell, thus reducing its toxicity. The chain is Fluoride-specific ion channel FluC 2 from Staphylococcus aureus (strain MRSA252).